The following is a 75-amino-acid chain: U14-hexatoxin-Mg1a (75 aa).

Positions 1-19 (MKLTLFILIVFVVLANVYA) are cleaved as a signal peptide. The propeptide occupies 20-31 (AGISERNIIGGR).

In terms of processing, contains 4 disulfide bonds. As to expression, expressed by the venom gland.

Its subcellular location is the secreted. Functionally, no toxicity is observed upon intracranial injection into mice and intrathorax injection into crickets. The polypeptide is U14-hexatoxin-Mg1a (Macrothele gigas (Japanese funnel web spider)).